We begin with the raw amino-acid sequence, 420 residues long: Putative zinc metalloprotease Lmo1318 (420 aa).

Histidine 18 contributes to the Zn(2+) binding site. The active site involves glutamate 19. Histidine 22 contributes to the Zn(2+) binding site. 4 consecutive transmembrane segments (helical) span residues 172–194, 304–326, 347–369, and 393–412; these read TIFAGPLFNFILAILIFTALAFV, NWIVQIFTILGNMFTGGFSLDML, VLNWTAVLSINLGIVNLLPLPAL, and GIIHFAGFALLMVLMILVTW. The 92-residue stretch at 176-267 folds into the PDZ domain; that stretch reads GPLFNFILAI…DGKTQDIDVK (92 aa).

It belongs to the peptidase M50B family. Zn(2+) serves as cofactor.

The protein localises to the cell membrane. The chain is Putative zinc metalloprotease Lmo1318 from Listeria monocytogenes serovar 1/2a (strain ATCC BAA-679 / EGD-e).